A 470-amino-acid polypeptide reads, in one-letter code: ATP synthase subunit beta (470 aa).

156–163 provides a ligand contact to ATP; the sequence is GGAGVGKT.

The protein belongs to the ATPase alpha/beta chains family. F-type ATPases have 2 components, CF(1) - the catalytic core - and CF(0) - the membrane proton channel. CF(1) has five subunits: alpha(3), beta(3), gamma(1), delta(1), epsilon(1). CF(0) has three main subunits: a(1), b(2) and c(9-12). The alpha and beta chains form an alternating ring which encloses part of the gamma chain. CF(1) is attached to CF(0) by a central stalk formed by the gamma and epsilon chains, while a peripheral stalk is formed by the delta and b chains.

Its subcellular location is the cell inner membrane. The catalysed reaction is ATP + H2O + 4 H(+)(in) = ADP + phosphate + 5 H(+)(out). Produces ATP from ADP in the presence of a proton gradient across the membrane. The catalytic sites are hosted primarily by the beta subunits. The protein is ATP synthase subunit beta of Nitratidesulfovibrio vulgaris (strain ATCC 29579 / DSM 644 / CCUG 34227 / NCIMB 8303 / VKM B-1760 / Hildenborough) (Desulfovibrio vulgaris).